Reading from the N-terminus, the 473-residue chain is Photosystem II CP43 reaction center protein (473 aa).

A propeptide spanning residues 1-14 is cleaved from the precursor; that stretch reads MKTLYSLRRFYPVE. At T15 the chain carries N-acetylthreonine. T15 is subject to Phosphothreonine. A run of 5 helical transmembrane segments spans residues 69-93, 134-155, 178-200, 255-275, and 291-312; these read LFEV…PHLA, LLGP…KDRN, KALY…RKIT, KPFA…LSYS, and WFNN…ASQA. E367 is a [CaMn4O5] cluster binding site. The helical transmembrane segment at 447–471 threads the bilayer; the sequence is RARAAAAGFEKGIDRDLEPVLSMTP.

This sequence belongs to the PsbB/PsbC family. PsbC subfamily. As to quaternary structure, PSII is composed of 1 copy each of membrane proteins PsbA, PsbB, PsbC, PsbD, PsbE, PsbF, PsbH, PsbI, PsbJ, PsbK, PsbL, PsbM, PsbT, PsbX, PsbY, PsbZ, Psb30/Ycf12, at least 3 peripheral proteins of the oxygen-evolving complex and a large number of cofactors. It forms dimeric complexes. The cofactor is Binds multiple chlorophylls and provides some of the ligands for the Ca-4Mn-5O cluster of the oxygen-evolving complex. It may also provide a ligand for a Cl- that is required for oxygen evolution. PSII binds additional chlorophylls, carotenoids and specific lipids..

The protein localises to the plastid. It localises to the chloroplast thylakoid membrane. Its function is as follows. One of the components of the core complex of photosystem II (PSII). It binds chlorophyll and helps catalyze the primary light-induced photochemical processes of PSII. PSII is a light-driven water:plastoquinone oxidoreductase, using light energy to abstract electrons from H(2)O, generating O(2) and a proton gradient subsequently used for ATP formation. The sequence is that of Photosystem II CP43 reaction center protein from Dioscorea elephantipes (Elephant's foot yam).